A 154-amino-acid polypeptide reads, in one-letter code: Myoglobin (154 aa).

One can recognise a Globin domain in the interval Gly-2 to Lys-148. Ser-4 is subject to Phosphoserine. His-65 lines the nitrite pocket. His-65 serves as a coordination point for O2. Position 68 is a phosphothreonine (Thr-68). Residue His-94 participates in heme b binding.

Belongs to the globin family. In terms of assembly, monomeric.

The protein localises to the cytoplasm. The protein resides in the sarcoplasm. The enzyme catalyses Fe(III)-heme b-[protein] + nitric oxide + H2O = Fe(II)-heme b-[protein] + nitrite + 2 H(+). It catalyses the reaction H2O2 + AH2 = A + 2 H2O. Monomeric heme protein which primary function is to store oxygen and facilitate its diffusion within muscle tissues. Reversibly binds oxygen through a pentacoordinated heme iron and enables its timely and efficient release as needed during periods of heightened demand. Depending on the oxidative conditions of tissues and cells, and in addition to its ability to bind oxygen, it also has a nitrite reductase activity whereby it regulates the production of bioactive nitric oxide. Under stress conditions, like hypoxia and anoxia, it also protects cells against reactive oxygen species thanks to its pseudoperoxidase activity. This Erythrocebus patas (Red guenon) protein is Myoglobin (MB).